Here is a 683-residue protein sequence, read N- to C-terminus: E3 ubiquitin-protein ligase RNF103 (683 aa).

A run of 4 helical transmembrane segments spans residues Phe6–Val26, Leu326–Gln346, Leu366–Phe386, and Met411–Ile431. Acidic residues predominate over residues Glu525–Asn542. A disordered region spans residues Glu525–Ser548. The RING-type zinc finger occupies Cys619–Arg661.

As to quaternary structure, interacts with DERL1 and VCP. As to expression, highly expressed in the normal cerebellum but not in the cerebral cortex.

The protein resides in the endoplasmic reticulum membrane. The enzyme catalyses S-ubiquitinyl-[E2 ubiquitin-conjugating enzyme]-L-cysteine + [acceptor protein]-L-lysine = [E2 ubiquitin-conjugating enzyme]-L-cysteine + N(6)-ubiquitinyl-[acceptor protein]-L-lysine.. The protein operates within protein modification; protein ubiquitination. Its function is as follows. Acts as an E2-dependent E3 ubiquitin-protein ligase, probably involved in the ER-associated protein degradation pathway. This chain is E3 ubiquitin-protein ligase RNF103 (Rnf103), found in Mus musculus (Mouse).